The sequence spans 254 residues: Thiazole synthase (254 aa).

The active-site Schiff-base intermediate with DXP is lysine 95. 1-deoxy-D-xylulose 5-phosphate contacts are provided by residues glycine 156, 182–183 (AG), and 204–205 (NT).

This sequence belongs to the ThiG family. In terms of assembly, homotetramer. Forms heterodimers with either ThiH or ThiS.

The protein localises to the cytoplasm. The catalysed reaction is [ThiS sulfur-carrier protein]-C-terminal-Gly-aminoethanethioate + 2-iminoacetate + 1-deoxy-D-xylulose 5-phosphate = [ThiS sulfur-carrier protein]-C-terminal Gly-Gly + 2-[(2R,5Z)-2-carboxy-4-methylthiazol-5(2H)-ylidene]ethyl phosphate + 2 H2O + H(+). The protein operates within cofactor biosynthesis; thiamine diphosphate biosynthesis. Catalyzes the rearrangement of 1-deoxy-D-xylulose 5-phosphate (DXP) to produce the thiazole phosphate moiety of thiamine. Sulfur is provided by the thiocarboxylate moiety of the carrier protein ThiS. In vitro, sulfur can be provided by H(2)S. This chain is Thiazole synthase, found in Shewanella baltica (strain OS195).